We begin with the raw amino-acid sequence, 305 residues long: tRNA pseudouridine synthase B (305 aa).

D39 acts as the Nucleophile in catalysis.

Belongs to the pseudouridine synthase TruB family. Type 1 subfamily.

The catalysed reaction is uridine(55) in tRNA = pseudouridine(55) in tRNA. Responsible for synthesis of pseudouridine from uracil-55 in the psi GC loop of transfer RNAs. The polypeptide is tRNA pseudouridine synthase B (Staphylococcus haemolyticus (strain JCSC1435)).